The primary structure comprises 341 residues: Uroporphyrinogen decarboxylase (341 aa).

Substrate-binding positions include 23-27 (RQAGR), aspartate 73, tyrosine 148, serine 203, and histidine 318.

The protein belongs to the uroporphyrinogen decarboxylase family. In terms of assembly, homodimer.

Its subcellular location is the cytoplasm. It carries out the reaction uroporphyrinogen III + 4 H(+) = coproporphyrinogen III + 4 CO2. It functions in the pathway porphyrin-containing compound metabolism; protoporphyrin-IX biosynthesis; coproporphyrinogen-III from 5-aminolevulinate: step 4/4. Its function is as follows. Catalyzes the decarboxylation of four acetate groups of uroporphyrinogen-III to yield coproporphyrinogen-III. This Brucella anthropi (strain ATCC 49188 / DSM 6882 / CCUG 24695 / JCM 21032 / LMG 3331 / NBRC 15819 / NCTC 12168 / Alc 37) (Ochrobactrum anthropi) protein is Uroporphyrinogen decarboxylase.